The sequence spans 348 residues: Casein kinase II subunit alpha (348 aa).

The Protein kinase domain maps to 55–340 (YEIVRKIGRG…PLEAMEHPFF (286 aa)). ATP is bound by residues 61–69 (IGRGKFSEV) and K84. The active-site Proton acceptor is the D172.

This sequence belongs to the protein kinase superfamily. Ser/Thr protein kinase family. CK2 subfamily. As to quaternary structure, tetramer of two alpha and two beta chains.

Its subcellular location is the cytoplasm. It catalyses the reaction L-seryl-[protein] + ATP = O-phospho-L-seryl-[protein] + ADP + H(+). It carries out the reaction L-threonyl-[protein] + ATP = O-phospho-L-threonyl-[protein] + ADP + H(+). Casein kinases are operationally defined by their preferential utilization of acidic proteins such as caseins as substrates. The alpha chain contains the catalytic site. The chain is Casein kinase II subunit alpha from Theileria annulata.